The following is a 470-amino-acid chain: Nucleoporin NUP49 (470 aa).

Polar residues predominate over residues 1–13 (MSLFGTNTTSQTP). Residues 1 to 92 (MSLFGTNTTS…STTTTTSQPQ (92 aa)) form a disordered region. GLFG repeat units lie at residues 17 to 20 (GLFG), 45 to 48 (GLFG), 63 to 66 (GLFG), 79 to 82 (GLFG), 96 to 99 (GLFG), 111 to 114 (GLFG), 127 to 130 (GLFG), 142 to 145 (GLFG), 156 to 159 (GLFG), 168 to 171 (GLFG), 181 to 184 (GLFG), and 193 to 197 (GLFGQ). Residues 20-31 (GTTTSQSAQTGS) are compositionally biased toward low complexity. Residues 32–74 (LFGTATSQPQQTGGLFGSTATQTPSSQLQSTGLFGSTTATSQP) are compositionally biased toward polar residues. Positions 75–92 (QQTGGLFGSTTTTTSQPQ) are enriched in low complexity. A disordered region spans residues 196-221 (GQSTTQPQQQQNATPGLTMGQSTNTQ). Low complexity predominate over residues 197 to 206 (QSTTQPQQQQ). A compositionally biased stretch (polar residues) spans 207 to 221 (NATPGLTMGQSTNTQ). 2 coiled-coil regions span residues 239 to 270 (TRFN…EAVD) and 375 to 401 (FSKT…AHLT).

It belongs to the nucleoporin GLFG family. Component of the nuclear pore complex (NPC). NPC constitutes the exclusive means of nucleocytoplasmic transport. NPCs allow the passive diffusion of ions and small molecules and the active, nuclear transport receptor-mediated bidirectional transport of macromolecules such as proteins, RNAs, ribonucleoparticles (RNPs), and ribosomal subunits across the nuclear envelope. Due to its 8-fold rotational symmetry, all subunits are present with 8 copies or multiples thereof.

Its subcellular location is the nucleus. It is found in the nuclear pore complex. The protein localises to the nucleus membrane. Its function is as follows. Functions as a component of the nuclear pore complex (NPC). NPC components, collectively referred to as nucleoporins (NUPs), can play the role of both NPC structural components and of docking or interaction partners for transiently associated nuclear transport factors. Active directional transport is assured by both, a Phe-Gly (FG) repeat affinity gradient for these transport factors across the NPC and a transport cofactor concentration gradient across the nuclear envelope (GSP1 and GSP2 GTPases associated predominantly with GTP in the nucleus, with GDP in the cytoplasm). NUP49 plays an important role in several nuclear transport pathways including poly(A)+ RNA, tRNA, and pre-ribosome transport. The protein is Nucleoporin NUP49 (NUP49) of Chaetomium thermophilum (strain DSM 1495 / CBS 144.50 / IMI 039719) (Thermochaetoides thermophila).